We begin with the raw amino-acid sequence, 166 residues long: Regulatory protein RecX (166 aa).

This sequence belongs to the RecX family.

Its subcellular location is the cytoplasm. In terms of biological role, modulates RecA activity. This chain is Regulatory protein RecX, found in Klebsiella pneumoniae (strain 342).